The primary structure comprises 257 residues: Kallikrein-1 (257 aa).

Positions 1-18 (MWFLVLCLALSLGGTGRA) are cleaved as a signal peptide. The propeptide at 19-24 (PPIQSR) is activation peptide. Residues 25–254 (IVGGWECSQP…YVKWIEDTIA (230 aa)) form the Peptidase S1 domain. Intrachain disulfides connect Cys-31-Cys-169, Cys-47-Cys-63, Cys-148-Cys-215, Cys-180-Cys-194, and Cys-205-Cys-230. Catalysis depends on His-62, which acts as the Charge relay system. Ser-90 carries an O-linked (GalNAc...) serine glycan. Residue Asn-99 is glycosylated (N-linked (GlcNAc...) asparagine). The O-linked (GalNAc...) serine glycan is linked to Ser-101. The N-linked (GlcNAc...) asparagine glycan is linked to Asn-105. Asp-116 acts as the Charge relay system in catalysis. N-linked (GlcNAc...) asparagine glycosylation occurs at Asn-160. O-linked (GalNAc...) serine glycosylation occurs at Ser-162. Residue Ser-209 is the Charge relay system of the active site.

The protein belongs to the peptidase S1 family. Kallikrein subfamily.

It carries out the reaction Preferential cleavage of Arg-|-Xaa bonds in small molecule substrates. Highly selective action to release kallidin (lysyl-bradykinin) from kininogen involves hydrolysis of Met-|-Xaa or Leu-|-Xaa.. In terms of biological role, glandular kallikreins cleave Met-Lys and Arg-Ser bonds in kininogen to release Lys-bradykinin. The protein is Kallikrein-1 (KLK1) of Macaca fascicularis (Crab-eating macaque).